A 226-amino-acid polypeptide reads, in one-letter code: Large ribosomal subunit protein uL1 (226 aa).

This sequence belongs to the universal ribosomal protein uL1 family. Part of the 50S ribosomal subunit.

Its function is as follows. Binds directly to 23S rRNA. The L1 stalk is quite mobile in the ribosome, and is involved in E site tRNA release. In terms of biological role, protein L1 is also a translational repressor protein, it controls the translation of the L11 operon by binding to its mRNA. This is Large ribosomal subunit protein uL1 from Mycoplasma genitalium (strain ATCC 33530 / DSM 19775 / NCTC 10195 / G37) (Mycoplasmoides genitalium).